Reading from the N-terminus, the 261-residue chain is Thiazole synthase (261 aa).

Lys-102 serves as the catalytic Schiff-base intermediate with DXP. 1-deoxy-D-xylulose 5-phosphate is bound by residues Gly-163, 189–190 (AG), and 211–212 (NT).

It belongs to the ThiG family. As to quaternary structure, homotetramer. Forms heterodimers with either ThiH or ThiS.

Its subcellular location is the cytoplasm. The enzyme catalyses [ThiS sulfur-carrier protein]-C-terminal-Gly-aminoethanethioate + 2-iminoacetate + 1-deoxy-D-xylulose 5-phosphate = [ThiS sulfur-carrier protein]-C-terminal Gly-Gly + 2-[(2R,5Z)-2-carboxy-4-methylthiazol-5(2H)-ylidene]ethyl phosphate + 2 H2O + H(+). It functions in the pathway cofactor biosynthesis; thiamine diphosphate biosynthesis. Functionally, catalyzes the rearrangement of 1-deoxy-D-xylulose 5-phosphate (DXP) to produce the thiazole phosphate moiety of thiamine. Sulfur is provided by the thiocarboxylate moiety of the carrier protein ThiS. In vitro, sulfur can be provided by H(2)S. In Acinetobacter baylyi (strain ATCC 33305 / BD413 / ADP1), this protein is Thiazole synthase.